Reading from the N-terminus, the 31-residue chain is MPTITSYFGFLLAVLTITSGLFISLRKLRLI.

The helical transmembrane segment at 3–23 (TITSYFGFLLAVLTITSGLFI) threads the bilayer.

Belongs to the PetL family. In terms of assembly, the 4 large subunits of the cytochrome b6-f complex are cytochrome b6, subunit IV (17 kDa polypeptide, PetD), cytochrome f and the Rieske protein, while the 4 small subunits are PetG, PetL, PetM and PetN. The complex functions as a dimer.

The protein resides in the plastid. Its subcellular location is the chloroplast thylakoid membrane. In terms of biological role, component of the cytochrome b6-f complex, which mediates electron transfer between photosystem II (PSII) and photosystem I (PSI), cyclic electron flow around PSI, and state transitions. PetL is important for photoautotrophic growth as well as for electron transfer efficiency and stability of the cytochrome b6-f complex. In Lotus japonicus (Lotus corniculatus var. japonicus), this protein is Cytochrome b6-f complex subunit 6.